A 174-amino-acid polypeptide reads, in one-letter code: NADH-quinone oxidoreductase subunit B 2 (174 aa).

The [4Fe-4S] cluster site is built by Cys-38, Cys-39, Cys-104, and Cys-133.

Belongs to the complex I 20 kDa subunit family. As to quaternary structure, NDH-1 is composed of 14 different subunits. Subunits NuoB, C, D, E, F, and G constitute the peripheral sector of the complex. [4Fe-4S] cluster serves as cofactor.

Its subcellular location is the cell membrane. The enzyme catalyses a quinone + NADH + 5 H(+)(in) = a quinol + NAD(+) + 4 H(+)(out). Its function is as follows. NDH-1 shuttles electrons from NADH, via FMN and iron-sulfur (Fe-S) centers, to quinones in the respiratory chain. The immediate electron acceptor for the enzyme in this species is believed to be ubiquinone. Couples the redox reaction to proton translocation (for every two electrons transferred, four hydrogen ions are translocated across the cytoplasmic membrane), and thus conserves the redox energy in a proton gradient. This is NADH-quinone oxidoreductase subunit B 2 from Chloroflexus aurantiacus (strain ATCC 29366 / DSM 635 / J-10-fl).